The following is a 274-amino-acid chain: Proliferating cell nuclear antigen 1 (274 aa).

Residues 61 to 80 (RCDRERVLGVNIASLNKVFK) mediate DNA binding.

This sequence belongs to the PCNA family. In terms of assembly, homotrimer. Interacts with ORC1 (via PIP-box motif); the interaction occurs during DNA replication in trophozoites. Interacts with ORC5; the interaction occurs during the trophozoite stage but not at the late schizont stage. Interacts with FEN1.

The protein localises to the nucleus. Its subcellular location is the chromosome. It is found in the cytoplasm. Its function is as follows. Auxiliary protein of DNA polymerase delta and is involved in the control of DNA replication by increasing the polymerase processibility during elongation of the leading strand. Involved in DNA damage response. This Plasmodium falciparum (isolate 3D7) protein is Proliferating cell nuclear antigen 1.